Reading from the N-terminus, the 198-residue chain is FMN-dependent NADH:quinone oxidoreductase (198 aa).

FMN-binding positions include serine 10, 16–18 (SQS), 94–97 (MYNF), and 138–141 (TRGG).

It belongs to the azoreductase type 1 family. Homodimer. It depends on FMN as a cofactor.

The catalysed reaction is 2 a quinone + NADH + H(+) = 2 a 1,4-benzosemiquinone + NAD(+). It catalyses the reaction N,N-dimethyl-1,4-phenylenediamine + anthranilate + 2 NAD(+) = 2-(4-dimethylaminophenyl)diazenylbenzoate + 2 NADH + 2 H(+). Its function is as follows. Quinone reductase that provides resistance to thiol-specific stress caused by electrophilic quinones. Also exhibits azoreductase activity. Catalyzes the reductive cleavage of the azo bond in aromatic azo compounds to the corresponding amines. This chain is FMN-dependent NADH:quinone oxidoreductase, found in Shewanella oneidensis (strain ATCC 700550 / JCM 31522 / CIP 106686 / LMG 19005 / NCIMB 14063 / MR-1).